A 599-amino-acid polypeptide reads, in one-letter code: Sulfite reductase [NADPH] flavoprotein alpha-component (599 aa).

Positions 64-202 (ITIISASQTG…AASEWRARVV (139 aa)) constitute a Flavodoxin-like domain. FMN contacts are provided by residues 70–75 (SQTGNA), 117–120 (STQG), and 153–162 (LGDSSYEFFC). In terms of domain architecture, FAD-binding FR-type spans 234–448 (DAPLVASLSV…IEHNDNFRLP (215 aa)). FAD-binding positions include threonine 322, alanine 356, 386–389 (RLYS), 404–406 (TVG), tyrosine 410, and 419–422 (GGAS). Residues 519 to 520 (SR), 525 to 529 (KVYVQ), and aspartate 561 each bind NADP(+). An FAD-binding site is contributed by tyrosine 599.

It belongs to the NADPH-dependent sulphite reductase flavoprotein subunit CysJ family. In the N-terminal section; belongs to the flavodoxin family. The protein in the C-terminal section; belongs to the flavoprotein pyridine nucleotide cytochrome reductase family. Alpha(8)-beta(8). The alpha component is a flavoprotein, the beta component is a hemoprotein. It depends on FAD as a cofactor. The cofactor is FMN.

It catalyses the reaction hydrogen sulfide + 3 NADP(+) + 3 H2O = sulfite + 3 NADPH + 4 H(+). Its pathway is sulfur metabolism; hydrogen sulfide biosynthesis; hydrogen sulfide from sulfite (NADPH route): step 1/1. In terms of biological role, component of the sulfite reductase complex that catalyzes the 6-electron reduction of sulfite to sulfide. This is one of several activities required for the biosynthesis of L-cysteine from sulfate. The flavoprotein component catalyzes the electron flow from NADPH -&gt; FAD -&gt; FMN to the hemoprotein component. The sequence is that of Sulfite reductase [NADPH] flavoprotein alpha-component from Escherichia coli O157:H7.